The sequence spans 168 residues: Group 2 truncated hemoglobin 3-1 (168 aa).

Heme b is bound at residue histidine 98.

It belongs to the truncated hemoglobin family. Group II subfamily. As to quaternary structure, homodimer when ferric. Mainly expressed in root nodules, but barely in leaves, roots, stems, flowers and fruits.

In terms of biological role, hemoglobin-like protein that exhibits an unusual concentration-independent binding of O(2) and CO. Required for general plant development and during nodulation. May promote shoot organogenesis from root explants. In Lotus japonicus (Lotus corniculatus var. japonicus), this protein is Group 2 truncated hemoglobin 3-1.